A 211-amino-acid polypeptide reads, in one-letter code: Tudor-interacting repair regulator protein (211 aa).

Glycyl lysine isopeptide (Lys-Gly) (interchain with G-Cter in ubiquitin) cross-links involve residues Lys-10 and Lys-151. An interaction with PXN region spans residues 118 to 205 (TLEQLHAVEI…TEKQKKALEK (88 aa)).

The protein belongs to the Nudix hydrolase family. TIRR subfamily. In terms of assembly, homodimer. Interacts with TP53BP1 (via the Tudor-like domain); interaction is abolished following DNA damage and TP53BP1 phosphorylation by ATM. Interacts (via the cytoplasmic part) with SDC4. Interacts with TGFB1I1 and PXN.

The protein resides in the nucleus. Functionally, key regulator of TP53BP1 required to stabilize TP53BP1 and regulate its recruitment to chromatin. In absence of DNA damage, interacts with the tandem Tudor-like domain of TP53BP1, masking the region that binds histone H4 dimethylated at 'Lys-20' (H4K20me2), thereby preventing TP53BP1 recruitment to chromatin and maintaining TP53BP1 localization to the nucleus. Following DNA damage, ATM-induced phosphorylation of TP53BP1 and subsequent recruitment of RIF1 leads to dissociate NUDT16L1/TIRR from TP53BP1, unmasking the tandem Tudor-like domain and allowing recruitment of TP53BP1 to DNA double strand breaks (DSBs). Binds U8 snoRNA. The sequence is that of Tudor-interacting repair regulator protein from Mus musculus (Mouse).